The sequence spans 161 residues: Crossover junction endodeoxyribonuclease RuvC (161 aa).

Catalysis depends on residues D8, E67, and D139. Residues D8, E67, and D139 each coordinate Mg(2+).

It belongs to the RuvC family. In terms of assembly, homodimer which binds Holliday junction (HJ) DNA. The HJ becomes 2-fold symmetrical on binding to RuvC with unstacked arms; it has a different conformation from HJ DNA in complex with RuvA. In the full resolvosome a probable DNA-RuvA(4)-RuvB(12)-RuvC(2) complex forms which resolves the HJ. Mg(2+) serves as cofactor.

It is found in the cytoplasm. The enzyme catalyses Endonucleolytic cleavage at a junction such as a reciprocal single-stranded crossover between two homologous DNA duplexes (Holliday junction).. The RuvA-RuvB-RuvC complex processes Holliday junction (HJ) DNA during genetic recombination and DNA repair. Endonuclease that resolves HJ intermediates. Cleaves cruciform DNA by making single-stranded nicks across the HJ at symmetrical positions within the homologous arms, yielding a 5'-phosphate and a 3'-hydroxyl group; requires a central core of homology in the junction. The consensus cleavage sequence is 5'-(A/T)TT(C/G)-3'. Cleavage occurs on the 3'-side of the TT dinucleotide at the point of strand exchange. HJ branch migration catalyzed by RuvA-RuvB allows RuvC to scan DNA until it finds its consensus sequence, where it cleaves and resolves the cruciform DNA. The chain is Crossover junction endodeoxyribonuclease RuvC from Wigglesworthia glossinidia brevipalpis.